Consider the following 220-residue polypeptide: MNKAKLIDHTLLKPDSTKEQIDTIINEAKAYQFKSVCVNPTHVQYASEQLKGTDVLVCTVIGFPLGATTTAVKSYETKDAINNGAQEIDMVINIGALKDGRFDEVQNDIEAVVQAANGKTVKVIIETVLLTEKEKIKACQLSEAAGAHFVKTSTGFAGGGATVEDVKLMKDTVGDRLEVKASGGVRNLEDFNNMIEAGATRIGASAGVQIIQGLESNTDY.

D89 (proton donor/acceptor) is an active-site residue. The Schiff-base intermediate with acetaldehyde role is filled by K151. Residue K180 is the Proton donor/acceptor of the active site.

The protein belongs to the DeoC/FbaB aldolase family. DeoC type 1 subfamily.

The protein resides in the cytoplasm. It catalyses the reaction 2-deoxy-D-ribose 5-phosphate = D-glyceraldehyde 3-phosphate + acetaldehyde. It functions in the pathway carbohydrate degradation; 2-deoxy-D-ribose 1-phosphate degradation; D-glyceraldehyde 3-phosphate and acetaldehyde from 2-deoxy-alpha-D-ribose 1-phosphate: step 2/2. In terms of biological role, catalyzes a reversible aldol reaction between acetaldehyde and D-glyceraldehyde 3-phosphate to generate 2-deoxy-D-ribose 5-phosphate. The chain is Deoxyribose-phosphate aldolase from Staphylococcus epidermidis (strain ATCC 12228 / FDA PCI 1200).